The primary structure comprises 424 residues: 5-methylthioadenosine/S-adenosylhomocysteine deaminase (424 aa).

Positions 60 and 62 each coordinate Zn(2+). Residues Glu89 and His181 each contribute to the substrate site. Residue His208 coordinates Zn(2+). The substrate site is built by Glu211 and Asp296. Position 296 (Asp296) interacts with Zn(2+).

It belongs to the metallo-dependent hydrolases superfamily. MTA/SAH deaminase family. Zn(2+) serves as cofactor.

The catalysed reaction is S-adenosyl-L-homocysteine + H2O + H(+) = S-inosyl-L-homocysteine + NH4(+). The enzyme catalyses S-methyl-5'-thioadenosine + H2O + H(+) = S-methyl-5'-thioinosine + NH4(+). Catalyzes the deamination of 5-methylthioadenosine and S-adenosyl-L-homocysteine into 5-methylthioinosine and S-inosyl-L-homocysteine, respectively. Is also able to deaminate adenosine. The sequence is that of 5-methylthioadenosine/S-adenosylhomocysteine deaminase from Thermococcus sibiricus (strain DSM 12597 / MM 739).